A 115-amino-acid chain; its full sequence is Glutaredoxin-like protein C5orf63 homolog (115 aa).

Residues Cys-40 and Cys-43 are joined by a disulfide bond.

Belongs to the glutaredoxin family. YDR286C subfamily.

This Mus musculus (Mouse) protein is Glutaredoxin-like protein C5orf63 homolog.